A 127-amino-acid polypeptide reads, in one-letter code: Venom protein family 16 protein 1 (127 aa).

Residues Met1 to Ser18 form the signal peptide.

Expressed by the venom gland (anterior main gland) (at protein level).

Its subcellular location is the secreted. This Platymeris rhadamanthus (Red spot assassin bug) protein is Venom protein family 16 protein 1.